The following is an 845-amino-acid chain: Proto-oncogene vav (845 aa).

The Calponin-homology (CH) domain maps to 1–119 (MELWRQCTHW…YTLSALSWTP (119 aa)). In terms of domain architecture, DH spans 194–373 (KRCCCLREIQ…RDLAQCVNEV (180 aa)). The PH domain maps to 402-504 (RPKIDGELKI…WMEQFEMAIS (103 aa)). The segment at 515–564 (GHDFQMFSFEETTSCKACQMLLRGTFYQGYRCHRCRASAHKECLGRVPPC) adopts a Phorbol-ester/DAG-type zinc-finger fold. Residues 592 to 660 (LGLPKMEVFQ…PCNRVKPYVH (69 aa)) enclose the SH3 1 domain. In terms of domain architecture, SH2 spans 671 to 765 (WYAGPMERAG…SLDTTLQFPF (95 aa)). An SH3 2 domain is found at 782–842 (KYFGTAKARY…PANYVEEDYS (61 aa)). A phosphotyrosine mark is found at Tyr826 and Tyr844.

In terms of assembly, interacts with SHB. Interacts with SH2B2, GRB2, GRB3, DOCK2, SLA, TEC and ZNF655/VIK. Interacts with SIAH2; without leading to its degradation. Associates with BLNK, PLCG1, GRB2 and NCK1 in a B-cell antigen receptor-dependent fashion. Interacts with CBLB; which inhibits tyrosine phosphorylation and down-regulates activity. May interact with CCPG1. Interacts with CLNK. Interacts with THEMIS2. Interacts with NEK3 and this interaction is prolactin-dependent. Interacts with ITK. Interacts with PTK2B/PYK2. Interacts with HCK. Interacts with PTK2B/PYK2. Interacts (via SH2 domain) with SYK. Interacts with ANKRD54. Interacts with CD6. Interacts with isoform 2 of CRACR2A. Interacts with LCP2; this interaction plays a role in TCR-mediated cytokine production. In terms of processing, phosphorylated on tyrosine residues by HCK in response to IFNG and bacterial lipopolysaccharide (LPS). Phosphorylated by FYN. As to expression, widely expressed in hematopoietic cells but not in other cell types.

In terms of biological role, couples tyrosine kinase signals with the activation of the Rho/Rac GTPases, thus leading to cell differentiation and/or proliferation. In Homo sapiens (Human), this protein is Proto-oncogene vav (VAV1).